The primary structure comprises 288 residues: NAD kinase (288 aa).

The active-site Proton acceptor is aspartate 70. NAD(+)-binding positions include 70–71 (DG), 144–145 (ND), arginine 155, lysine 172, aspartate 174, 185–190 (TGYSLS), and glutamine 245.

Belongs to the NAD kinase family. A divalent metal cation is required as a cofactor.

It is found in the cytoplasm. The catalysed reaction is NAD(+) + ATP = ADP + NADP(+) + H(+). Its function is as follows. Involved in the regulation of the intracellular balance of NAD and NADP, and is a key enzyme in the biosynthesis of NADP. Catalyzes specifically the phosphorylation on 2'-hydroxyl of the adenosine moiety of NAD to yield NADP. The protein is NAD kinase of Geobacter sp. (strain M21).